A 447-amino-acid polypeptide reads, in one-letter code: Tubulin beta-2 chain (447 aa).

Residues Q11, E69, S138, G142, T143, G144, N204, and N226 each contribute to the GTP site. Residue E69 coordinates Mg(2+). The segment covering 419-428 has biased composition (polar residues); sequence VSEYQQYQDA. The disordered stretch occupies residues 419-447; the sequence is VSEYQQYQDATSDEEGEYEDEDQEPEEDM. Over residues 429–447 the composition is skewed to acidic residues; that stretch reads TSDEEGEYEDEDQEPEEDM.

The protein belongs to the tubulin family. As to quaternary structure, dimer of alpha and beta chains. A typical microtubule is a hollow water-filled tube with an outer diameter of 25 nm and an inner diameter of 15 nM. Alpha-beta heterodimers associate head-to-tail to form protofilaments running lengthwise along the microtubule wall with the beta-tubulin subunit facing the microtubule plus end conferring a structural polarity. Microtubules usually have 13 protofilaments but different protofilament numbers can be found in some organisms and specialized cells. Mg(2+) serves as cofactor.

It is found in the cytoplasm. Its subcellular location is the cytoskeleton. Its function is as follows. Tubulin is the major constituent of microtubules, a cylinder consisting of laterally associated linear protofilaments composed of alpha- and beta-tubulin heterodimers. Microtubules grow by the addition of GTP-tubulin dimers to the microtubule end, where a stabilizing cap forms. Below the cap, tubulin dimers are in GDP-bound state, owing to GTPase activity of alpha-tubulin. This is Tubulin beta-2 chain (TUBB2) from Triticum aestivum (Wheat).